Reading from the N-terminus, the 131-residue chain is Small ribosomal subunit protein uS11 (131 aa).

It belongs to the universal ribosomal protein uS11 family. In terms of assembly, part of the 30S ribosomal subunit. Interacts with proteins S7 and S18. Binds to IF-3.

In terms of biological role, located on the platform of the 30S subunit, it bridges several disparate RNA helices of the 16S rRNA. Forms part of the Shine-Dalgarno cleft in the 70S ribosome. The sequence is that of Small ribosomal subunit protein uS11 from Endomicrobium trichonymphae.